Consider the following 298-residue polypeptide: Octopine catabolism/uptake operon regulatory protein OccR (298 aa).

The 58-residue stretch at 1–58 folds into the HTH lysR-type domain; it reads MNLRQVEAFRAVMLTGQMTAAAELMLVTQPAISRLIKDFEQATKLQLFERRGNHIIPT. The segment at residues 18–37 is a DNA-binding region (H-T-H motif); that stretch reads MTAAAELMLVTQPAISRLIK.

The protein belongs to the LysR transcriptional regulatory family.

In terms of biological role, positive regulatory protein for the occ operon involved in octopine catabolism and uptake. Also acts as a negative regulator of its expression. This Agrobacterium tumefaciens (strain Ach5) protein is Octopine catabolism/uptake operon regulatory protein OccR (occR).